The following is a 159-amino-acid chain: Cytochrome c-type biogenesis protein CcmE (159 aa).

Topologically, residues 1 to 8 (MNLRRKNR) are cytoplasmic. The helical; Signal-anchor for type II membrane protein transmembrane segment at 9 to 29 (LWVVCAVLAGLGLTTALVLYA) threads the bilayer. Residues 30–159 (LRANIDLFYT…PQRADKDTSS (130 aa)) are Periplasmic-facing. The segment at 129–159 (KHDENYTPPEVEKAMQENHRRPQRADKDTSS) is disordered. Positions 130 and 134 each coordinate heme.

Belongs to the CcmE/CycJ family.

The protein localises to the cell inner membrane. Functionally, heme chaperone required for the biogenesis of c-type cytochromes. Transiently binds heme delivered by CcmC and transfers the heme to apo-cytochromes in a process facilitated by CcmF and CcmH. The sequence is that of Cytochrome c-type biogenesis protein CcmE from Salmonella typhimurium (strain LT2 / SGSC1412 / ATCC 700720).